Here is a 490-residue protein sequence, read N- to C-terminus: Lysine--tRNA ligase (490 aa).

Positions 400 and 407 each coordinate Mg(2+).

The protein belongs to the class-II aminoacyl-tRNA synthetase family. As to quaternary structure, homodimer. The cofactor is Mg(2+).

Its subcellular location is the cytoplasm. It carries out the reaction tRNA(Lys) + L-lysine + ATP = L-lysyl-tRNA(Lys) + AMP + diphosphate. The polypeptide is Lysine--tRNA ligase (lysS) (Mycoplasma genitalium (strain ATCC 33530 / DSM 19775 / NCTC 10195 / G37) (Mycoplasmoides genitalium)).